A 247-amino-acid polypeptide reads, in one-letter code: MGICLICEQGADNSALSQLAERWGLVHDENAIMALVLTPQHLELRKRDEPKLGGIYVDFVSGTMAHRRRFGGGRGEAVAKAIGIKKDYLPTIVDATAGLGRDAFVLASLGCHVRMLERHPVVAALLDDGLQRGYQDEEIGGWLQQRMTLLHASSITALADITPQPDVVYLDPMYPHKQKSALVKKEMRVFQSLVGADEDADSLLSPARVLAKRRVVVKRPDYAEPLAGVAASAAITTKNHRFDIYPC.

S-adenosyl-L-methionine is bound by residues 101–102, 117–118, 153–154, and Asp171; these read RD, ER, and SS.

It belongs to the methyltransferase superfamily. RsmJ family.

The protein resides in the cytoplasm. It catalyses the reaction guanosine(1516) in 16S rRNA + S-adenosyl-L-methionine = N(2)-methylguanosine(1516) in 16S rRNA + S-adenosyl-L-homocysteine + H(+). In terms of biological role, specifically methylates the guanosine in position 1516 of 16S rRNA. This Photorhabdus laumondii subsp. laumondii (strain DSM 15139 / CIP 105565 / TT01) (Photorhabdus luminescens subsp. laumondii) protein is Ribosomal RNA small subunit methyltransferase J.